Reading from the N-terminus, the 117-residue chain is Transcription elongation factor SPT4 (117 aa).

The segment at methionine 1 to leucine 40 is interaction with SUPT5H. The C4-type zinc finger occupies cysteine 16–cysteine 36.

It belongs to the SPT4 family. As to quaternary structure, interacts with SUPT5H to form the DSIF complex. DSIF interacts with RNA polymerase II and with the positive transcription elongation factor b complex (P-TEFb complex), which is composed of CDK9 and cyclin-T.

It is found in the nucleus. May function as a component of the DRB sensitivity-inducing factor complex (DSIF complex), which regulates transcription elongation by RNA polymerase II. Probably enhances transcriptional pausing at sites proximal to the promoter, which may in turn facilitate the assembly of an elongation competent RNA polymerase II complex. In Xenopus laevis (African clawed frog), this protein is Transcription elongation factor SPT4 (supt4h1).